The primary structure comprises 976 residues: Peptidylglycine alpha-amidating monooxygenase (976 aa).

Residues 1–25 form the signal peptide; that stretch reads MAGRARSGLLLLLLGLLALQSSCLA. The tract at residues 1–497 is peptidylglycine alpha-hydroxylating monooxygenase; that stretch reads MAGRARSGLL…EGPWEPEPSG (497 aa). The propeptide occupies 26–35; that stretch reads FRSPLSVFKR. The Intragranular segment spans residues 36 to 866; sequence FKETTRSFSN…QKLSTEPGSG (831 aa). 5 disulfides stabilise this stretch: Cys-47/Cys-186, Cys-81/Cys-126, Cys-114/Cys-131, Cys-227/Cys-334, and Cys-293/Cys-315. Cu(2+) contacts are provided by His-107 and His-108. Positions 172, 242, 244, and 314 each coordinate Cu(2+). A peptidyl-alpha-hydroxyglycine alpha-amidating lyase region spans residues 498-820; sequence DFHVEEELDW…LTEKMEHRSV (323 aa). NHL repeat units follow at residues 501-544, 570-611, 620-665, and 673-717; these read VEEE…NSFD, AEIL…LDPH, LGRS…FSPS, and GEES…FKTD. Val-520 is a binding site for Ca(2+). An a protein-binding site is contributed by Arg-533. Position 585 (His-585) interacts with Zn(2+). Leu-587 contributes to the Ca(2+) binding site. A disulfide bridge links Cys-634 with Cys-655. Tyr-654 contributes to the a protein binding site. Residue His-690 participates in Zn(2+) binding. An intrachain disulfide couples Cys-702 to Cys-713. An a protein-binding site is contributed by Arg-706. A glycan (N-linked (GlcNAc...) asparagine) is linked at Asn-765. One copy of the NHL 5 repeat lies at 769 to 812; the sequence is GEIIDVFKPVRKHFDMPHDIVASEDGTVYIGDAHTNTVWKFTLT. Val-774 carries the sulfotyrosine modification. Residue His-786 participates in Zn(2+) binding. A Ca(2+)-binding site is contributed by Asp-787. Glu-792 bears the Sulfotyrosine mark. The chain crosses the membrane as a helical span at residues 867–890; the sequence is VSVVLITTLLVIPVLVLLAIVMFI. The Cytoplasmic portion of the chain corresponds to 891 to 976; that stretch reads RWKKSRAFGD…APLPKPAPSS (86 aa). Ser-921, Ser-932, and Ser-945 each carry phosphoserine. An interaction with RASSF9 region spans residues 928–945; sequence NFFASRKGYSRKGFDRVS. A disordered region spans residues 940-976; that stretch reads GFDRVSTEGSDQEKDEDDGTESEEEYSAPLPKPAPSS. Residue Thr-946 is modified to Phosphothreonine. Ser-949 is subject to Phosphoserine. A compositionally biased stretch (acidic residues) spans 952–965; it reads EKDEDDGTESEEEY. A Phosphothreonine modification is found at Thr-959. Ser-961 is modified (phosphoserine).

It in the C-terminal section; belongs to the peptidyl-alpha-hydroxyglycine alpha-amidating lyase family. The protein in the N-terminal section; belongs to the copper type II ascorbate-dependent monooxygenase family. In terms of assembly, monomer. Interacts with RASSF9. Zn(2+) is required as a cofactor. Requires Cu(2+) as cofactor.

The protein localises to the cytoplasmic vesicle. Its subcellular location is the secretory vesicle membrane. It localises to the membrane. The protein resides in the secreted. The catalysed reaction is a [peptide]-C-terminal glycine + 2 L-ascorbate + O2 = a [peptide]-C-terminal (2S)-2-hydroxyglycine + 2 monodehydro-L-ascorbate radical + H2O. It carries out the reaction a [peptide]-C-terminal (2S)-2-hydroxyglycine = a [peptide]-C-terminal amide + glyoxylate. It catalyses the reaction N-dodecanoylglycine + 2 L-ascorbate + O2 = N-dodecanoyl-(2S)-hydroxyglycine + 2 monodehydro-L-ascorbate radical + H2O. The enzyme catalyses N-dodecanoyl-(2S)-hydroxyglycine = dodecanamide + glyoxylate. The catalysed reaction is N-(9Z,12Z,15Z)-octadecatrienoylglycine + 2 L-ascorbate + O2 = N-(9Z,12Z,15Z)-octadecatrienoyl-(2S)-hydroxyglycine + 2 monodehydro-L-ascorbate radical + H2O. It carries out the reaction N-(9Z,12Z,15Z)-octadecatrienoyl-(2S)-hydroxyglycine = (9Z,12Z,15Z)-octadecatrienamide + glyoxylate. It catalyses the reaction N-(9Z-octadecenoyl)glycine + 2 L-ascorbate + O2 = N-(9Z-octadecenoyl)-(2S)-hydroxyglycine + 2 monodehydro-L-ascorbate radical + H2O. The enzyme catalyses N-(9Z-octadecenoyl)-(2S)-hydroxyglycine = (9Z)-octadecenamide + glyoxylate. The catalysed reaction is N-tetradecanoylglycine + 2 L-ascorbate + O2 = N-tetradecanoyl-(2S)-hydroxyglycine + 2 monodehydro-L-ascorbate radical + H2O. It carries out the reaction N-tetradecanoyl-(2S)-hydroxyglycine = tetradecamide + glyoxylate. It catalyses the reaction N-decanoylglycine + 2 L-ascorbate + O2 = N-decanoyl-(2S)-hydroxyglycine + 2 monodehydro-L-ascorbate radical + H2O. The enzyme catalyses N-decanoyl-(2S)-hydroxyglycine = decanamide + glyoxylate. The catalysed reaction is N-octanoylglycine + 2 L-ascorbate + O2 = N-octanoyl-(2S)-hydroxyglycine + 2 monodehydro-L-ascorbate radical + H2O. It carries out the reaction N-octanoyl-(2S)-hydroxyglycine = octanamide + glyoxylate. Its activity is regulated as follows. PAM activity is inhibited by EDTA, phenylglyoxal and diethyl pyrocarbonate. PAL activity is stimulated by cadmium and inhibited by mercury. Functionally, bifunctional enzyme that catalyzes amidation of the C-terminus of proteins. Alpha-amidation is present at the C-terminus of many endocrine hormones and neuropeptides and is required for their activity. C-terminal amidation also takes place in response to protein fragmentation triggered by oxidative stress, promoting degradation of amidated protein fragments by the proteasome. Alpha-amidation involves two sequential reactions, both of which are catalyzed by separate catalytic domains of the enzyme. The first step, catalyzed by peptidyl alpha-hydroxylating monooxygenase (PHM) domain, is the copper-, ascorbate-, and O2- dependent stereospecific hydroxylation (with S stereochemistry) at the alpha-carbon (C-alpha) of the C-terminal glycine of the peptidylglycine substrate. The second step, catalyzed by the peptidylglycine amidoglycolate lyase (PAL) domain, is the zinc-dependent cleavage of the N-C-alpha bond, producing the alpha-amidated peptide and glyoxylate. Similarly, catalyzes the two-step conversion of an N-fatty acylglycine to a primary fatty acid amide and glyoxylate. In Rattus norvegicus (Rat), this protein is Peptidylglycine alpha-amidating monooxygenase.